A 373-amino-acid chain; its full sequence is MTVVPENFVPGLDGVVAFTTEIAEPDKDGGALRYRGVDIEDLVSQRVTFGDVWALLVDGNFGSGLPPAEPFPLPIHSGDVRVDVQAGLAMLAPIWGYAPLLDIDDATARQQLARASVMALSYVAQSARGIYQPAVPQRIIDECSTVTARFMTRWQGEPDPRHIEAIDAYWVSAAEHGMNASTFTARVIASTGADVAAALSGAIGAMSGPLHGGAPARVLPMLDEVERAGDARSVVKGILDRGEKLMGFGHRVYRAEDPRARVLRAAAERLGAPRYEVAVAVEQAALSELRERRPDRAIETNVEFWAAVVLDFARVPANMMPAMFTCGRTAGWCAHILEQKRLGKLVRPSAIYVGPGPRSPESVDGWERVLTTA.

Catalysis depends on residues His-250 and Glu-303.

This sequence belongs to the citrate synthase family.

The enzyme catalyses oxaloacetate + acetyl-CoA + H2O = citrate + CoA + H(+). The protein operates within carbohydrate metabolism; tricarboxylic acid cycle; isocitrate from oxaloacetate: step 1/2. This Mycobacterium bovis (strain ATCC BAA-935 / AF2122/97) protein is Putative citrate synthase 2 (citA).